Consider the following 481-residue polypeptide: UDP-N-acetylmuramate--L-alanine ligase (481 aa).

115–121 (GTHGKTT) contacts ATP.

This sequence belongs to the MurCDEF family.

The protein resides in the cytoplasm. The enzyme catalyses UDP-N-acetyl-alpha-D-muramate + L-alanine + ATP = UDP-N-acetyl-alpha-D-muramoyl-L-alanine + ADP + phosphate + H(+). The protein operates within cell wall biogenesis; peptidoglycan biosynthesis. Its function is as follows. Cell wall formation. In Rhodospirillum rubrum (strain ATCC 11170 / ATH 1.1.1 / DSM 467 / LMG 4362 / NCIMB 8255 / S1), this protein is UDP-N-acetylmuramate--L-alanine ligase.